The sequence spans 457 residues: Argininosuccinate lyase (457 aa).

This sequence belongs to the lyase 1 family. Argininosuccinate lyase subfamily.

Its subcellular location is the cytoplasm. It catalyses the reaction 2-(N(omega)-L-arginino)succinate = fumarate + L-arginine. It participates in amino-acid biosynthesis; L-arginine biosynthesis; L-arginine from L-ornithine and carbamoyl phosphate: step 3/3. In Escherichia coli O127:H6 (strain E2348/69 / EPEC), this protein is Argininosuccinate lyase.